Consider the following 250-residue polypeptide: 2-(R)-hydroxypropyl-CoM dehydrogenase (250 aa).

Residues serine 12–asparagine 14, aspartate 33, aspartate 60–valine 61, and asparagine 87 contribute to the NAD(+) site. Arginine 152 contacts 2-oxopropyl-coenzyme M. The Proton acceptor role is filled by tyrosine 155. Isoleucine 188 to methionine 192 lines the NAD(+) pocket. Tryptophan 195–arginine 196 is a 2-oxopropyl-coenzyme M binding site.

It belongs to the short-chain dehydrogenases/reductases (SDR) family. In terms of assembly, homodimer in solution. Homotetramer. Component III of the aliphatic epoxide carboxylation complex together with components I, II and IV.

It carries out the reaction (R)-2-hydroxypropyl-coenzyme M + NAD(+) = 2-oxopropyl-coenzyme M + NADH + H(+). It participates in alkene metabolism; propylene degradation. With respect to regulation, inhibited by the arginine-specific modifiers 2,3-butanedione and phenylglyoxal. 2-(2-methyl-2-hydroxypropylthio)ethanesulfonate (M-HPC), an achiral analog of both R-HPC and S-HPC, and (2S)-2-hydroxypropyl-coenzyme M (S-HPC) are competitive inhibitors. Inhibited (at 70%) by the coenzyme M analog 2-bromoethanesulfonate (BES). Functionally, involved in aliphatic epoxide carboxylation. Catalyzes the reversible oxidation of (R)-2-hydroxypropyl-coenzyme M (R-HPC) to 2-oxopropyl-coenzyme M (2-KPC). The enzyme is highly specific for the R enantiomers. In vitro can also use achiral 2-propanol and short-chain (R)- and (S)-2-alkanols. This Xanthobacter autotrophicus (strain ATCC BAA-1158 / Py2) protein is 2-(R)-hydroxypropyl-CoM dehydrogenase.